The sequence spans 710 residues: Prolyl endopeptidase (710 aa).

Met1 carries the N-acetylmethionine modification. N6-acetyllysine is present on Lys157. Residues Ser554, Asp641, and His680 each act as charge relay system in the active site.

This sequence belongs to the peptidase S9A family.

The protein resides in the cytoplasm. It catalyses the reaction Hydrolysis of Pro-|-Xaa &gt;&gt; Ala-|-Xaa in oligopeptides.. Its function is as follows. Cleaves peptide bonds on the C-terminal side of prolyl residues within peptides that are up to approximately 30 amino acids long. This chain is Prolyl endopeptidase (Prep), found in Mus musculus (Mouse).